Reading from the N-terminus, the 471-residue chain is Putative multidrug resistance protein MdtD (471 aa).

Helical transmembrane passes span 12–32, 49–69, 72–92, 101–123, 138–158, 165–185, 195–215, 220–240, 265–285, 286–306, 342–362, 393–413, and 431–451; these read LWIV…VNTA, MVIV…GWMA, IGVR…SLFC, LVMS…RLTV, FVTL…GILV, WIFL…LWLM, FDIF…LALD, LGIS…SILW, IGLF…FMTP, VFLQ…MIPM, LVFM…VLFF, LLSM…GLLL, and VFLY…LIFA.

The protein belongs to the major facilitator superfamily. TCR/Tet family.

It is found in the cell inner membrane. This is Putative multidrug resistance protein MdtD from Enterobacter sp. (strain 638).